The sequence spans 966 residues: RNA polymerase-associated protein RapA (966 aa).

The region spanning 163–337 (EVGQRLHPRV…FARLKLLDAD (175 aa)) is the Helicase ATP-binding domain. 176–183 (DEVGLGKT) contributes to the ATP binding site. A DEAH box motif is present at residues 283-286 (DEAH). Residues 488–642 (RVEWLITFLK…ICPMGMALFE (155 aa)) enclose the Helicase C-terminal domain.

The protein belongs to the SNF2/RAD54 helicase family. RapA subfamily. As to quaternary structure, interacts with the RNAP. Has a higher affinity for the core RNAP than for the holoenzyme. Its ATPase activity is stimulated by binding to RNAP.

Functionally, transcription regulator that activates transcription by stimulating RNA polymerase (RNAP) recycling in case of stress conditions such as supercoiled DNA or high salt concentrations. Probably acts by releasing the RNAP, when it is trapped or immobilized on tightly supercoiled DNA. Does not activate transcription on linear DNA. Probably not involved in DNA repair. The chain is RNA polymerase-associated protein RapA from Actinobacillus succinogenes (strain ATCC 55618 / DSM 22257 / CCUG 43843 / 130Z).